Here is a 1002-residue protein sequence, read N- to C-terminus: Ephrin type-B receptor 5 (1002 aa).

The first 29 residues, 1–29 (MDSNADISARRVSGMDWLWLVCFFHLVTS), serve as a signal peptide directing secretion. Residues 30-564 (LEEILLDTTG…AQDRLPLIVG (535 aa)) are Extracellular-facing. The Eph LBD domain occupies 31 to 213 (EEILLDTTGE…FFYKCPAVVK (183 aa)). Fibronectin type-III domains are found at residues 344-452 (APRD…TSQS) and 453-548 (VPSA…TLMA). Asparagine 446 carries an N-linked (GlcNAc...) asparagine glycan. The helical transmembrane segment at 565–585 (SALGGLAFLVIAAIAILAIIF) threads the bilayer. Topologically, residues 586–1002 (KSKRRETPYT…HLNQLEPVEV (417 aa)) are cytoplasmic. Positions 637–900 (IKIEEVIGSG…QIVSALDKMI (264 aa)) constitute a Protein kinase domain. ATP-binding positions include 643–651 (IGSGEFGEV) and lysine 669. The Proton acceptor role is filled by aspartate 762. Residues 906–928 (LKATGTGSSRPSQPLLSNSPPDF) are disordered. The span at 910 to 928 (GTGSSRPSQPLLSNSPPDF) shows a compositional bias: polar residues. The region spanning 929 to 993 (PSLSNAHEWL…LNSIQLMKVH (65 aa)) is the SAM domain. Positions 1000-1002 (VEV) match the PDZ-binding motif.

This sequence belongs to the protein kinase superfamily. Tyr protein kinase family. Ephrin receptor subfamily. In terms of tissue distribution, most abundant in thymus and detectable in brain, retina, kidney, lung and heart. Not detected in skeletal muscle and liver.

It is found in the membrane. The catalysed reaction is L-tyrosyl-[protein] + ATP = O-phospho-L-tyrosyl-[protein] + ADP + H(+). Receptor for members of the ephrin-B family. In Gallus gallus (Chicken), this protein is Ephrin type-B receptor 5 (EPHB5).